The chain runs to 300 residues: 33 kDa chaperonin (300 aa).

Intrachain disulfides connect cysteine 235–cysteine 237 and cysteine 269–cysteine 272.

The protein belongs to the HSP33 family. Post-translationally, under oxidizing conditions two disulfide bonds are formed involving the reactive cysteines. Under reducing conditions zinc is bound to the reactive cysteines and the protein is inactive.

It is found in the cytoplasm. In terms of biological role, redox regulated molecular chaperone. Protects both thermally unfolding and oxidatively damaged proteins from irreversible aggregation. Plays an important role in the bacterial defense system toward oxidative stress. The chain is 33 kDa chaperonin from Pseudomonas fluorescens (strain SBW25).